The following is a 42-amino-acid chain: MTNTGTTGRIPLWLVGTVVGTLALGLVALFFYGAYHGLGSSL.

A helical membrane pass occupies residues 10–30; it reads IPLWLVGTVVGTLALGLVALF.

Belongs to the PsbJ family. PSII is composed of 1 copy each of membrane proteins PsbA, PsbB, PsbC, PsbD, PsbE, PsbF, PsbH, PsbI, PsbJ, PsbK, PsbL, PsbM, PsbT, PsbX, PsbY, PsbZ, Psb30/Ycf12, at least 3 peripheral proteins of the oxygen-evolving complex and a large number of cofactors. It forms dimeric complexes.

It is found in the plastid. Its subcellular location is the chloroplast thylakoid membrane. Functionally, one of the components of the core complex of photosystem II (PSII). PSII is a light-driven water:plastoquinone oxidoreductase that uses light energy to abstract electrons from H(2)O, generating O(2) and a proton gradient subsequently used for ATP formation. It consists of a core antenna complex that captures photons, and an electron transfer chain that converts photonic excitation into a charge separation. The sequence is that of Photosystem II reaction center protein J from Oltmannsiellopsis viridis (Marine flagellate).